The primary structure comprises 338 residues: Heme-dependent oxidative N-demethylase alpha subunit (338 aa).

The heme b site is built by tyrosine 38 and histidine 194. Arginine 224 (proton donor) is an active-site residue. Asparagine 226 is a binding site for heme b. A dimethylamine-binding site is contributed by glutamate 266. Positions 317 and 318 each coordinate heme b.

The heme-dependent oxidative N-demethylase (HODM) is a heterotetramer composed of a catalytic alpha subunit, a FMN/2Fe-2S-dependent oxidoreductase beta subunit, a gamma subunit with putative aminotransferase activity, and a delta subunit of unknown function.

The catalysed reaction is dimethylamine + NADPH + O2 + H(+) = methylamine + formaldehyde + NADP(+) + H2O. Functionally, component of the heme-dependent oxidative N-demethylase (HODM) enzyme, that catalyzes the NADPH-dependent oxidation of dimethylamine (DMA) to methylamine (MA) and formaldehyde. Functions in bacterial methylated amine catabolism, linking alkylamine oxidation to the tetrahydrofolate C1 pool. The alpha subunit of HODM binds heme, oxygen and DMA, and serves as the site of the oxidative N-demethylase activity. In Ectopseudomonas mendocina (strain ymp) (Pseudomonas mendocina), this protein is Heme-dependent oxidative N-demethylase alpha subunit.